The following is a 193-amino-acid chain: uncharacterized protein (193 aa).

The segment at 55–94 (PVGGAAGARSLSQALPAPAPPPPPPPGLGPSSERPWPSPW) is disordered. Over residues 71 to 82 (APAPPPPPPPGL) the composition is skewed to pro residues.

This is an uncharacterized protein from Homo sapiens (Human).